A 332-amino-acid chain; its full sequence is MATSIKDVAREAGVSIATVSRVLNDIDVVNEDTKKKVLDAIKELGYRPNIVARSLKTQRTKTIGILLPDISNQFYPEIVRGAEDVSNIYDYNIILCNSDLDIEKEKEYLRVLKEKMVDGVIYMSSSLRDEILELINELDLKTVLVETRDKDGVLPSVTIDNIKGSYDSTNLLIQKGIKDIAFIGTKKDNMNAWGDRYVGYEKAMNEAGIKIDPELLYLDSIKVKSGYEGIQHFLGLNKKFKGVVCASDDIAMGAINALRDNNMEVPKDVSVVGFNDNFAASIFYPKITTVSQPTYDMGSVAMRMLIKLLNKKELDEPNYVLEHELIERESTI.

Residues 1–57 form the HTH lacI-type domain; it reads MATSIKDVAREAGVSIATVSRVLNDIDVVNEDTKKKVLDAIKELGYRPNIVARSLKT. Residues 5–24 constitute a DNA-binding region (H-T-H motif); sequence IKDVAREAGVSIATVSRVLN.

Involved in the regulation of amylase production. This Clostridium saccharobutylicum protein is HTH-type transcriptional regulator RegA (regA).